A 615-amino-acid chain; its full sequence is Membrane protein insertase YidC (615 aa).

5 helical membrane passes run 9–29, 384–404, 458–478, 516–536, and 556–576; these read LMFI…VLGP, LVGN…LVLY, LPML…TVTI, LIGA…FTMW, and WFPV…VIYW.

The protein belongs to the OXA1/ALB3/YidC family. Type 1 subfamily. As to quaternary structure, interacts with the Sec translocase complex via SecD. Specifically interacts with transmembrane segments of nascent integral membrane proteins during membrane integration.

It localises to the cell inner membrane. In terms of biological role, required for the insertion and/or proper folding and/or complex formation of integral membrane proteins into the membrane. Involved in integration of membrane proteins that insert both dependently and independently of the Sec translocase complex, as well as at least some lipoproteins. Aids folding of multispanning membrane proteins. The polypeptide is Membrane protein insertase YidC (Caulobacter vibrioides (strain ATCC 19089 / CIP 103742 / CB 15) (Caulobacter crescentus)).